We begin with the raw amino-acid sequence, 1022 residues long: Sodium-dependent transporter snf-12 (1022 aa).

At M1–D165 the chain is on the cytoplasmic side. The chain crosses the membrane as a helical span at residues F166–A185. The Extracellular portion of the chain corresponds to K186–G192. The helical transmembrane segment at G193–L213 threads the bilayer. Topologically, residues H214 to W241 are cytoplasmic. The helical transmembrane segment at A242 to I262 threads the bilayer. The Extracellular segment spans residues H263–H337. The chain crosses the membrane as a helical span at residues L338–G358. S359 is a topological domain (cytoplasmic). The chain crosses the membrane as a helical span at residues I360–L380. The Extracellular segment spans residues R381 to A412. Residues A413 to F433 traverse the membrane as a helical segment. Residues S434 to S444 lie on the Cytoplasmic side of the membrane. The chain crosses the membrane as a helical span at residues V445–F465. The Extracellular portion of the chain corresponds to V466–S498. A helical transmembrane segment spans residues F499 to I519. Residues D520–A550 are Cytoplasmic-facing. Residues F551 to V571 form a helical membrane-spanning segment. At F572–S584 the chain is on the extracellular side. A helical membrane pass occupies residues F585–L605. Residues T606–K641 are Cytoplasmic-facing. Residues F642 to G662 traverse the membrane as a helical segment. Residues Y663–Y677 lie on the Extracellular side of the membrane. A helical transmembrane segment spans residues E678–M698. The Cytoplasmic segment spans residues Q699–K1022. 2 disordered regions span residues R867–D948 and I995–K1022. The segment covering S893–K907 has biased composition (pro residues). Over residues D933–D943 the composition is skewed to low complexity.

It belongs to the sodium:neurotransmitter symporter (SNF) (TC 2.A.22) family. As to quaternary structure, may interact with STAT family transcription factor sta-2; the interaction is probably direct.

It is found in the membrane. Its subcellular location is the cytoplasm. The protein resides in the vesicle. Probably mediates sodium-dependent uptake of unknown small molecule(s). By positively modulating expression, in the epidermis, of antimicrobial peptides such as nlp-29, plays a role in resistance to fungal infection and in the response to physical wounding and phorbol ester PMA treatment. Role in response to wounding of the epidermis may be facilitated by recruitment of snf-12 to the wound site by microtubule-dependent vesicle trafficking. Functions cell autonomously in the epidermis, in concert with STAT transcription factor sta-2, probably acting at vesicular membranes, downstream of a p38 MAPK/pmk-1 pathway. This Caenorhabditis elegans protein is Sodium-dependent transporter snf-12.